Here is a 396-residue protein sequence, read N- to C-terminus: Mannonate dehydratase (396 aa).

Belongs to the mannonate dehydratase family. It depends on Fe(2+) as a cofactor. Mn(2+) is required as a cofactor.

It carries out the reaction D-mannonate = 2-dehydro-3-deoxy-D-gluconate + H2O. The protein operates within carbohydrate metabolism; pentose and glucuronate interconversion. In terms of biological role, catalyzes the dehydration of D-mannonate. This Serratia proteamaculans (strain 568) protein is Mannonate dehydratase.